The following is a 499-amino-acid chain: Probable mitochondrial-processing peptidase subunit alpha-2, chloroplastic/mitochondrial (499 aa).

Belongs to the peptidase M16 family. As to quaternary structure, heterodimer of alpha and beta subunits, forming the mitochondrial processing protease (MPP) in which subunit alpha is involved in substrate recognition and binding and subunit beta is the catalytic subunit. Component of the ubiquinol-cytochrome c oxidoreductase (cytochrome b-c1 complex, complex III, CIII), a multisubunit enzyme composed of 10 subunits. The complex is composed of 3 respiratory subunits cytochrome b (MT-CYB), cytochrome c1 (CYC1-1 or CYC1-2) and Rieske protein (UCR1-1 or UCR1-2), 2 core protein subunits MPPalpha1 (or MPPalpha2) and MPPB, and 5 low-molecular weight protein subunits QCR7-1 (or QCR7-2), UCRQ-1 (or UCRQ-2), QCR9, UCRY and probably QCR6-1 (or QCR6-2). The complex exists as an obligatory dimer and forms supercomplexes (SCs) in the inner mitochondrial membrane with NADH-ubiquinone oxidoreductase (complex I, CI), resulting in different assemblies (supercomplexes SCI(1)III(2) and SCI(2)III(4)). Interacts with TIM23-2.

It is found in the plastid. Its subcellular location is the chloroplast stroma. The protein localises to the mitochondrion matrix. The protein resides in the mitochondrion inner membrane. Its function is as follows. Substrate recognition and binding subunit of the essential mitochondrial processing protease (MPP), which cleaves the mitochondrial sequence off newly imported precursors proteins. Functionally, component of the ubiquinol-cytochrome c oxidoreductase, a multisubunit transmembrane complex that is part of the mitochondrial electron transport chain which drives oxidative phosphorylation. The respiratory chain contains 3 multisubunit complexes succinate dehydrogenase (complex II, CII), ubiquinol-cytochrome c oxidoreductase (cytochrome b-c1 complex, complex III, CIII) and cytochrome c oxidase (complex IV, CIV), that cooperate to transfer electrons derived from NADH and succinate to molecular oxygen, creating an electrochemical gradient over the inner membrane that drives transmembrane transport and the ATP synthase. The cytochrome b-c1 complex catalyzes electron transfer from ubiquinol to cytochrome c, linking this redox reaction to translocation of protons across the mitochondrial inner membrane, with protons being carried across the membrane as hydrogens on the quinol. In the process called Q cycle, 2 protons are consumed from the matrix, 4 protons are released into the intermembrane space and 2 electrons are passed to cytochrome c. The sequence is that of Probable mitochondrial-processing peptidase subunit alpha-2, chloroplastic/mitochondrial (MPPalpha2) from Arabidopsis thaliana (Mouse-ear cress).